Consider the following 1115-residue polypeptide: Neural cell adhesion molecule 1 (1115 aa).

The N-terminal stretch at 1–19 (MLRTKDLIWTLFFLGTAVS) is a signal peptide. 5 Ig-like C2-type domains span residues 20–111 (LQVD…ATVN), 116–205 (QKLM…KDIQ), 212–302 (PTVQ…ASIH), 309–402 (PKIT…MYLE), and 407–492 (PKLQ…ESLE). Over 20 to 711 (LQVDIVPSQG…NGSPTAGLST (692 aa)) the chain is Extracellular. 2 cysteine pairs are disulfide-bonded: C41/C96 and C139/C189. Heparin contacts are provided by residues 152–156 (KHKGR) and 161–165 (KKDVR). N222 is a glycosylation site (N-linked (GlcNAc...) asparagine; partial). Residues C235 and C288 are joined by a disulfide bond. N316, N348, N424, N450, and N479 each carry an N-linked (GlcNAc...) asparagine glycan. A disulfide bridge connects residues C330 and C386. C427 and C480 are joined by a disulfide. Fibronectin type-III domains are found at residues 500–599 (TPSS…TQPV) and 601–696 (EPSA…SAQP). Residue T706 is the site of GPI-anchor amidated serine attachment. Residues 712-729 (GAIVGILIVIFVLLLVVM) form a helical membrane-spanning segment. Residues 730-1115 (DITCYFLNKC…TQTKENESKA (386 aa)) are Cytoplasmic-facing. Disordered stretches follow at residues 756 to 809 (GAKG…TEPE), 839 to 912 (FATA…SASN), and 924 to 1115 (VLSP…ESKA). Residues 758–799 (KGKDMEEGKAAFSKDESKEPIVEVRTEEERTPNHDGGKHTEP) are compositionally biased toward basic and acidic residues. Phosphoserine occurs at positions 770 and 774. Composition is skewed to low complexity over residues 800 to 809 (NETTPLTEPE), 845 to 856 (SPTSETTTLTSS), and 876 to 896 (TPSK…KVAP). S887 and S890 each carry phosphoserine. 2 stretches are compositionally biased toward polar residues: residues 902–912 (DTPTSAPSASN) and 926–935 (SPSTPASAGE). Residue S926 is modified to Phosphoserine. T929 carries the post-translational modification Phosphothreonine. 2 stretches are compositionally biased toward low complexity: residues 936-974 (TSKA…PQAK) and 999-1012 (AATA…KAAT). A phosphoserine mark is found at S946 and S958. Phosphothreonine is present on T1001. S1005 carries the phosphoserine modification. 2 stretches are compositionally biased toward basic and acidic residues: residues 1019–1037 (EDLK…DLAK) and 1074–1091 (KTEK…ESEA). T1030 carries the post-translational modification Phosphothreonine.

Interacts with MDK. Found in a complex with SLC39A6, SLC39A10 and with NCAM1; this complex controls NCAM1 phosphorylation and integration into focal adhesion complexes during epithelial-tomesenchymal transition. Interacts with synaptic plasticity regulator PANTS. In terms of processing, polysialylated by ST8SIA2 and ST8SIA4. Polysialylation modulates cell interactions by confering both attractive and repulsive properties that are highly regulated by ST8SIA2 and ST8SIA4. Polysialylation is formed on a-2,3-linked sialic acid of core glycans.

The protein resides in the cell membrane. In terms of biological role, this protein is a cell adhesion molecule involved in neuron-neuron adhesion, neurite fasciculation, outgrowth of neurites, etc. The chain is Neural cell adhesion molecule 1 from Mus musculus (Mouse).